A 31-amino-acid chain; its full sequence is Acetyl-CoA carboxylase (31 aa).

The disordered stretch occupies residues 1 to 31 (RISSSVIAHKTQLDSGKREVYSSHMQLGGPK). Positions 11-21 (TQLDSGKREVY) are enriched in basic and acidic residues.

It carries out the reaction hydrogencarbonate + acetyl-CoA + ATP = malonyl-CoA + ADP + phosphate + H(+). Its pathway is lipid metabolism; malonyl-CoA biosynthesis; malonyl-CoA from acetyl-CoA: step 1/1. The polypeptide is Acetyl-CoA carboxylase (Catharanthus roseus (Madagascar periwinkle)).